The chain runs to 160 residues: MAVKKVVTHPAEVLETPAETVTVFDKKLKKLLDDMYDTMLEMDGVGLAAPQIGILKRAAVVEIGDDRGRIDLVNPEILEKSGEQTGIEGCLSFPNVYGDVTRADYVKVRAFNRQGKPFILEARGFLARAVQHEMDHLDGVLFTSKISKYYTEDELADMEG.

Fe cation-binding residues include C90 and H132. E133 is a catalytic residue. Fe cation is bound at residue H136.

The protein belongs to the polypeptide deformylase family. Fe(2+) is required as a cofactor.

It carries out the reaction N-terminal N-formyl-L-methionyl-[peptide] + H2O = N-terminal L-methionyl-[peptide] + formate. Removes the formyl group from the N-terminal Met of newly synthesized proteins. Requires at least a dipeptide for an efficient rate of reaction. N-terminal L-methionine is a prerequisite for activity but the enzyme has broad specificity at other positions. The polypeptide is Peptide deformylase 1 (defA) (Bacillus subtilis (strain 168)).